A 268-amino-acid chain; its full sequence is Cell division coordinator CpoB (268 aa).

The signal sequence occupies residues 1–21; that stretch reads MRMCRRVVTVLALSLPLAAWA. The stretch at 58 to 94 forms a coiled coil; that stretch reads QLFMQLQQMQDQLSRQQGIIEELQNDVSRMKQENLER. The segment at 104-146 is disordered; the sequence is SGAAPAATPDNSSGGGASNAAPDAAAGAAAQQPAGSSQPGDPA. The span at 121 to 143 shows a compositional bias: low complexity; sequence SNAAPDAAAGAAAQQPAGSSQPG. TPR repeat units follow at residues 149 to 181, 185 to 218, and 222 to 255; these read KLYY…YPNS, GNAQ…YPKH, and PDSL…YPGT.

It belongs to the CpoB family.

It localises to the periplasm. Its function is as follows. Mediates coordination of peptidoglycan synthesis and outer membrane constriction during cell division. The sequence is that of Cell division coordinator CpoB from Pseudomonas putida (strain ATCC 47054 / DSM 6125 / CFBP 8728 / NCIMB 11950 / KT2440).